Reading from the N-terminus, the 677-residue chain is Methionine--tRNA ligase (677 aa).

The short motif at 15–25 (PYANGSIHLGH) is the 'HIGH' region element. The Zn(2+) site is built by C146, C149, C159, and C162. Residues 333 to 337 (KMSKS) carry the 'KMSKS' region motif. Position 336 (K336) interacts with ATP. The region spanning 575–677 (DFAKVDLRVA…EGAKPGQQVK (103 aa)) is the tRNA-binding domain.

The protein belongs to the class-I aminoacyl-tRNA synthetase family. MetG type 1 subfamily. Homodimer. The cofactor is Zn(2+).

Its subcellular location is the cytoplasm. The catalysed reaction is tRNA(Met) + L-methionine + ATP = L-methionyl-tRNA(Met) + AMP + diphosphate. Its function is as follows. Is required not only for elongation of protein synthesis but also for the initiation of all mRNA translation through initiator tRNA(fMet) aminoacylation. This chain is Methionine--tRNA ligase, found in Enterobacter sp. (strain 638).